The following is a 32-amino-acid chain: MKILNSVLIACAWWVAQVSAVVVGIHIYYEYF.

This is an uncharacterized protein from Enterobacteria phage T4 (Bacteriophage T4).